Here is a 195-residue protein sequence, read N- to C-terminus: Protein GrpE (195 aa).

The protein belongs to the GrpE family. In terms of assembly, homodimer.

It localises to the cytoplasm. Participates actively in the response to hyperosmotic and heat shock by preventing the aggregation of stress-denatured proteins, in association with DnaK and GrpE. It is the nucleotide exchange factor for DnaK and may function as a thermosensor. Unfolded proteins bind initially to DnaJ; upon interaction with the DnaJ-bound protein, DnaK hydrolyzes its bound ATP, resulting in the formation of a stable complex. GrpE releases ADP from DnaK; ATP binding to DnaK triggers the release of the substrate protein, thus completing the reaction cycle. Several rounds of ATP-dependent interactions between DnaJ, DnaK and GrpE are required for fully efficient folding. The protein is Protein GrpE of Francisella tularensis subsp. novicida (strain U112).